The sequence spans 456 residues: MQPKTFVHQLHAILLEPEVNKWIYWSPTDNTVFFLKPYDPNFSTHVLKRYFKHGNVNSFVRQLHMYGFHKLSHPSPDQSSANNGNVKELVEWKFTHPSGFFFKEANAGILNKIQRKSTGVGKDGKRKNILSPISVSYVDASRLNVLSQQSGPVSAREPSNMFMGSPVHYSTSQSPPHISIPQQQQSSGPYLISSLPPQQPTVNMMRRQSISARMMNSYDYPNQFSTQDSIVQPQQPQQVLSPQALSGPPMKKSGTLSSTDDLKTTSLPIVNYPMPYHPGAFAQQQQQQQQPLPTVPPYSSYSTPFPSMMNSLSNSASNSPALGVCNNNVTLPKKSNISERQALDNHIQTLKNSLSTITDLIEKHINSASQDENKTLTNDAMNKDLRTSLSLLQNSKEEIIQLESKWMSMQSVKTTALPLQETTNTSSTLTSLTSSIIPKSIPIITKGEVATKPASY.

A DNA-binding region spans residues 3 to 118 (PKTFVHQLHA…ILNKIQRKST (116 aa)). Residues 229–299 (SIVQPQQPQQ…QPLPTVPPYS (71 aa)) are disordered. 3 stretches are compositionally biased toward low complexity: residues 231–246 (VQPQQPQQVLSPQALS), 253–267 (SGTLSSTDDLKTTSL), and 283–299 (QQQQQQQQPLPTVPPYS).

It belongs to the HSF family.

The protein resides in the nucleus. This chain is Protein MGA1 (MGA1), found in Saccharomyces cerevisiae (strain ATCC 204508 / S288c) (Baker's yeast).